Reading from the N-terminus, the 105-residue chain is Small ribosomal subunit protein eS25 (105 aa).

This sequence belongs to the eukaryotic ribosomal protein eS25 family. In terms of assembly, component of the small ribosomal subunit. Mature ribosomes consist of a small (40S) and a large (60S) subunit. The 40S subunit contains about 32 different proteins and 1 molecule of RNA (18S). The 60S subunit contains 45 different proteins and 3 molecules of RNA (25S, 5.8S and 5S).

The protein localises to the cytoplasm. Its function is as follows. Component of the ribosome, a large ribonucleoprotein complex responsible for the synthesis of proteins in the cell. The small ribosomal subunit (SSU) binds messenger RNAs (mRNAs) and translates the encoded message by selecting cognate aminoacyl-transfer RNA (tRNA) molecules. The large subunit (LSU) contains the ribosomal catalytic site termed the peptidyl transferase center (PTC), which catalyzes the formation of peptide bonds, thereby polymerizing the amino acids delivered by tRNAs into a polypeptide chain. The nascent polypeptides leave the ribosome through a tunnel in the LSU and interact with protein factors that function in enzymatic processing, targeting, and the membrane insertion of nascent chains at the exit of the ribosomal tunnel. The chain is Small ribosomal subunit protein eS25 (RPS25B) from Candida albicans (strain SC5314 / ATCC MYA-2876) (Yeast).